A 285-amino-acid chain; its full sequence is Transmembrane protein 53-B (285 aa).

The helical transmembrane segment at F165–V185 threads the bilayer.

This sequence belongs to the TMEM53 family.

It localises to the nucleus outer membrane. Functionally, ensures normal bone formation, through the negative regulation of bone morphogenetic protein (BMP) signaling in osteoblast lineage cells by blocking cytoplasm-nucleus translocation of phosphorylated SMAD proteins. The polypeptide is Transmembrane protein 53-B (tmem53-b) (Xenopus laevis (African clawed frog)).